The following is a 163-amino-acid chain: 3-isopropylmalate dehydratase small subunit (163 aa).

It belongs to the LeuD family. LeuD type 2 subfamily. Heterodimer of LeuC and LeuD.

It carries out the reaction (2R,3S)-3-isopropylmalate = (2S)-2-isopropylmalate. It participates in amino-acid biosynthesis; L-leucine biosynthesis; L-leucine from 3-methyl-2-oxobutanoate: step 2/4. Functionally, catalyzes the isomerization between 2-isopropylmalate and 3-isopropylmalate, via the formation of 2-isopropylmaleate. This Clostridioides difficile (strain 630) (Peptoclostridium difficile) protein is 3-isopropylmalate dehydratase small subunit.